The primary structure comprises 132 residues: UPF0060 membrane protein SG1469 (132 aa).

3 helical membrane passes run 5–25 (VLLYIATAVAAILGCYLPYCY), 32–52 (LLLIPAALSLIAFVGLLVLYP), and 60–80 (AAYGGVYILTAFLWLRFIDGI).

It belongs to the UPF0060 family.

It is found in the cell inner membrane. This chain is UPF0060 membrane protein SG1469, found in Sodalis glossinidius (strain morsitans).